Reading from the N-terminus, the 66-residue chain is Large ribosomal subunit protein bL35 (66 aa).

Positions 20–41 are disordered; sequence GKVMSAQRGKRHGMIKRTKKQI. The segment covering 27–41 has biased composition (basic residues); sequence RGKRHGMIKRTKKQI.

It belongs to the bacterial ribosomal protein bL35 family.

This is Large ribosomal subunit protein bL35 from Rhodopseudomonas palustris (strain BisB5).